The sequence spans 412 residues: Burnettramic acids biosynthesis cluster protein E (412 aa).

Disordered regions lie at residues 1–66 (MAIA…KKIR), 308–342 (RNPT…SLAT), and 386–412 (SRAE…AAKG). The span at 36–58 (EDEQWALDELQDELCQEEPSDSE) shows a compositional bias: acidic residues. The segment covering 395–404 (EATTEPSVQS) has biased composition (polar residues).

Its pathway is mycotoxin biosynthesis. Its function is as follows. Part of the gene cluster that mediates the biosynthesis of burnettramic acids, an unusual class of bolaamphiphilic pyrrolizidinediones that display potent antibacterial, antifungal, and cytotoxic activities. The first step of the biosynthesis of burnettramic acids is the hydroxylation of proline by the proline hydroxylase buaE to generate 4-hydroxyproline. The PKS-NRPS buaA and trans-enoyl reductase buaC construct the highly reduced polyketide chain, and the condensation (C) domain of buaA then catalyzes the amide bond formation with the activated 4-hydroxyproline. This is followed by the R domain releasing the nascent polyketide-peptide directly via a Dieckmann condensation to afford a tetramic acid fused to the hydroxyproline, generating the bicyclic pyrrolidinedione moiety. The cytochrome P450 monooxygenases buaD and buaG are likely responsible for the multiple hydroxylations on the polyketide chain and its terminus, although in the heterologous context, buaD does not appear to be required. Therefore, while buaG may be a multifunctional cytochrome P450 monooxygenase, it cannot be ruled out that the two secondary alcohols on the polyketide chain could have an acetate origin. Finally, the glycosyltransferase buaB transfers beta-D-mannose to the aglycone burnettramic acid A to form burnettramic acid A. Burnettramic acid B is a minor cis-pyrrolizidine epimer of burnettramic acid A and it is likely that small amounts of it form naturally in acidic environments. The role of the uncharacterized protein buaF in the biosynthesis of burnettramic acids has still to be determined. The protein is Burnettramic acids biosynthesis cluster protein E of Petromyces alliaceus (Aspergillus alliaceus).